The primary structure comprises 440 residues: GTPase Der (440 aa).

2 EngA-type G domains span residues 4–168 (PVVA…PPEK) and 177–352 (IKIA…GRHS). Residues 10–17 (GRPNVGKS), 57–61 (DTGGL), 120–123 (NKVE), 183–190 (GRPNVGKS), 230–234 (DTAGM), and 295–298 (NKWD) contribute to the GTP site. The KH-like domain occupies 353–437 (MRISTPGLNA…PIRFVLRKKT (85 aa)).

The protein belongs to the TRAFAC class TrmE-Era-EngA-EngB-Septin-like GTPase superfamily. EngA (Der) GTPase family. In terms of assembly, associates with the 50S ribosomal subunit.

In terms of biological role, GTPase that plays an essential role in the late steps of ribosome biogenesis. This is GTPase Der from Pelotomaculum thermopropionicum (strain DSM 13744 / JCM 10971 / SI).